We begin with the raw amino-acid sequence, 293 residues long: Transcription elongation factor S-II (293 aa).

The TFIIS N-terminal domain occupies 4–81; sequence ADIRSAKAAL…KKWKADVSKG (78 aa). A disordered region spans residues 81–123; that stretch reads GRPLKTTTTTSSTPSKHADVGSQAQKQVQKQSSSGQRTFKSDN. Residues 100–116 are compositionally biased toward low complexity; sequence VGSQAQKQVQKQSSSGQ. A TFIIS central domain is found at 133–248; that stretch reads IRNNCIGLMY…HAQGAKPQKA (116 aa). The TFIIS-type zinc-finger motif lies at 251-291; sequence DLFTCGKCKQKKVSYYQMQTRSADEPMTTFCECTVCGNRWK. 4 residues coordinate Zn(2+): Cys-255, Cys-258, Cys-283, and Cys-286.

This sequence belongs to the TFS-II family.

The protein resides in the nucleus. Its function is as follows. Necessary for efficient RNA polymerase II transcription elongation past template-encoded arresting sites. The arresting sites in DNA have the property of trapping a certain fraction of elongating RNA polymerases that pass through, resulting in locked ternary complexes. Cleavage of the nascent transcript by S-II allows the resumption of elongation from the new 3'-terminus. The sequence is that of Transcription elongation factor S-II (tfs1) from Schizosaccharomyces pombe (strain 972 / ATCC 24843) (Fission yeast).